We begin with the raw amino-acid sequence, 674 residues long: UvrABC system protein C (674 aa).

The region spanning 64–142 is the GIY-YIG domain; sequence NGPGVYRMLN…IKRLRPRFNV (79 aa). One can recognise a UVR domain in the interval 252–287; the sequence is QAVKATIASAMAEASENLDFERAALYRDRLAALSHV.

The protein belongs to the UvrC family. Interacts with UvrB in an incision complex.

The protein localises to the cytoplasm. In terms of biological role, the UvrABC repair system catalyzes the recognition and processing of DNA lesions. UvrC both incises the 5' and 3' sides of the lesion. The N-terminal half is responsible for the 3' incision and the C-terminal half is responsible for the 5' incision. The chain is UvrABC system protein C from Rhizobium meliloti (strain 1021) (Ensifer meliloti).